A 135-amino-acid chain; its full sequence is Salivary protein 15 Iper-1 (135 aa).

Residues Met1–Ala22 form the signal peptide. N-linked (GlcNAc...) asparagine glycans are attached at residues Asn93 and Asn104. The tract at residues Gly116–Cys135 is CD4-binding.

It belongs to the salp15 family. Interacts with host CD4. Interacts with host DC-SIGN (CD209). In terms of assembly, (Microbial infection) Interacts with Borrelia outer surface protein C (OspC). In terms of tissue distribution, expressed in salivary glands from feeding female ticks. Highly expressed 4 days after start of feeding.

It is found in the secreted. Its function is as follows. Salivary tick protein that downregulates host immune system by binding to both dendritic cells, and CD4(+) T cells. Specifically binds to the CD4 coreceptor on T cells. This interaction prevents the activation of the Src kinase, Lck, and its downstream substrate Zap-70, and results in deficient activation of PLCgamma1, the repression of calcium fluxes triggered by T-cell antigen receptor (TCR) ligation, and a subsequent reduction in interleukin-2 production. This salivary protein also binds to DC-SIGN (CD209) on dendritic cells (DC) and activates the Raf-1 kinase/MEK signaling pathway that results in down-regulating expression of pro-inflammatory cytokines. Furthermore, it inhibits T cell proliferation induced by DCs. It also inhibits in vitro keratinocyte inflammation induced by Borrelia burgdorferi or by the major outer surface protein (OspC) of Borrelia. In addition, it downregulates chemokines and monocyte chemoattractant protein 1, as well as several antimicrobial peptides such as defensins, cathelicidin, psoriasin, and RNase 7. Apart from its immunomodulatory activities, it is also associated with protection of Borrelia spirochetes from antibody-mediated killing through its binding to OspC. In vivo, tests on different immune disease animal models show promising therapeutic results, e.g., in inhibiting HIV infection, experimental autoimmune encephalomyelitis, transplantation rejection, and asthma. Functionally, (Microbial infection) Protects Borrelia garinii from anti-Borrelia antibody-mediated cytotoxicity in vitro. May facilitate B.garinii transmission in mouse model. In terms of biological role, (Microbial infection) Protects Borrelia burgdorferi from anti-Borrelia antibody-mediated cytotoxicity in vitro. (Microbial infection) Protects Borrelia afzelii from anti-Borrelia antibody-mediated cytotoxicity in vitro. The protein is Salivary protein 15 Iper-1 of Ixodes persulcatus (Taiga tick).